Consider the following 965-residue polypeptide: MSENTYQIETRRRSRSKTPFLRSSCDHENCEHAGEEGHVHHLKRKSAAPNVQTIIEEHIVESSISKKTRAKAFAQLTSDYSSDDMTPDAKRKQNSITATVTSILTKRSGGATSTPRNRSQLETTQNTLNSAQEKLNQSNGNLSSGNVSDYLAYIEYRDAGEYWNKTPKTDYTYSELSPHRRQLAPGIVAMPNMSRKSLENHNDRVNYMVQQNPAQEEFIRRRYQSKYTQQVNYDSADELDATFGQQKQSWWLIRLIQLVVSSITTVWSRVTNLSATETTAYQNYHAKRQQSQQVGLWWKIVQTIGGGLASLLRYLYVFIGSVLSLDTWLLRSSDAENKSKKRFLIFLLILLPLLLLSGWLLLQEDQRSAYVQRAEALLPLPLSIFGSLRSRFSNAGATLKSWMEVPTVRSPQREAEAIKVNMASIEQNIQKALTAEEYENILNHVNSYVQQLVELKMQQHSKELAPQQIELFVKLMKENLKQIMYKTELSEKDLSDLAIKLKLELQSSGGWQDGAKLSQANLEEITKLIKAEVHLHESHYTIQLDRIDFASLLERILAAPALADFVDARISLRVGELEPKESSGSSDAEVQIERLNREIAFIKLALSDKQAENADLHQSISNLKLGQEDLLERIQQHELSQDRRFHGLLAEIENKLSALNDSQFALLNKQIKLSLVEILGFKQSTAGGSAGQLDDFDLQTWVRSMFVAKDYLEQQLLELNKRTNNNIRDEIERSSILLMSDISQRLKREILLVVEAKHNESTKALKGHIREEEVRQIVKTVLAIYDADKTGLVDFALESAGGQILSTRCTESYQTKSAQISVFGIPLWYPTNTPRVAISPNVQPGECWAFQGFPGFLVLKLNSLVYVTGFTLEHIPKSLSPTGRIESAPRNFTVWGLEQEKDQEPVLFGDYQFEDNGASLQYFAVQNLDIKRPYEIVELRIETNHGHPTYTCLYRFRVHGKPPAT.

Residues 1 to 20 (MSENTYQIETRRRSRSKTPF) are disordered. Helical transmembrane passes span 303–323 (TIGG…GSVL) and 343–363 (FLIF…LLLQ). The stretch at 585–612 (SSDAEVQIERLNREIAFIKLALSDKQAE) forms a coiled coil. The 163-residue stretch at 801–963 (GGQILSTRCT…YRFRVHGKPP (163 aa)) folds into the SUN domain.

In terms of assembly, core component of the LINC complex which is composed of inner nuclear membrane SUN domain-containing proteins coupled to outer nuclear membrane KASH domain-containing nesprins. In terms of tissue distribution, expressed in all cells in the eye disk.

It is found in the membrane. It localises to the cytoplasm. The protein resides in the cytoskeleton. The protein localises to the microtubule organizing center. Its subcellular location is the perinuclear region. Its function is as follows. Component of the LINC (LInker of Nucleoskeleton and Cytoskeleton) complex involved in the connection between the nuclear lamina and the cytoskeleton. Is required to nuclear migration in eye and to anchor klar in the nuclear membrane. This chain is Klaroid protein, found in Drosophila melanogaster (Fruit fly).